Reading from the N-terminus, the 473-residue chain is MKSILDGLADTTFRTITTDLLYMGSNDVQYEDTKGEMASKLGYFPQKLPLSSFRRDHSPDKMTIGDDNLLSFYPLDQFNVTEFFNRSVSTFKENDDNLKCGENFMDMECFMILTASQQLIIAVLSLTLGTFTVLENFLVLCVILQSRTLRCRPSYHFIGSLAVADLLGSVIFVYSFLDFHVFHRKDSSNVFLFKLGGVTASFTASVGSLFLTAIDRYISIHRPLAYKRIVTRTKAVIAFCVMWTIAIIIAVLPLLGWNCKKLKSVCSDIFPLIDENYLMFWIGVTSILLLFIVYAYVYILWKAHSHAVRMLQRGTQKSIIIHTSEDGKVQITRPEQTRMDIRLAKTLVLILVVLIICWGPLLAIMVYDVFGKMNNPIKTVFAFCSMLCLMDSTVNPIIYALRSQDLRHAFLEQCPPCEGTSQPLDNSMESDCQHRHGNNAGNVHRAAENCIKSTVKIAKVTMSVSTETSGEAV.

At 1 to 118 the chain is on the extracellular side; it reads MKSILDGLAD…CFMILTASQQ (118 aa). A required for mitochondrial localization region spans residues 2–23; the sequence is KSILDGLADTTFRTITTDLLYM. N-linked (GlcNAc...) asparagine glycans are attached at residues Asn79 and Asn85. The chain crosses the membrane as a helical span at residues 119–144; that stretch reads LIIAVLSLTLGTFTVLENFLVLCVIL. The Cytoplasmic segment spans residues 145–156; it reads QSRTLRCRPSYH. Residues 157–177 form a helical membrane-spanning segment; that stretch reads FIGSLAVADLLGSVIFVYSFL. Topologically, residues 178 to 189 are extracellular; it reads DFHVFHRKDSSN. A helical transmembrane segment spans residues 190–214; the sequence is VFLFKLGGVTASFTASVGSLFLTAI. Residues 215–234 are Cytoplasmic-facing; the sequence is DRYISIHRPLAYKRIVTRTK. Residues 235-257 form a helical membrane-spanning segment; it reads AVIAFCVMWTIAIIIAVLPLLGW. Residues 258 to 275 are Extracellular-facing; that stretch reads NCKKLKSVCSDIFPLIDE. A helical membrane pass occupies residues 276–301; the sequence is NYLMFWIGVTSILLLFIVYAYVYILW. At 302–346 the chain is on the cytoplasmic side; it reads KAHSHAVRMLQRGTQKSIIIHTSEDGKVQITRPEQTRMDIRLAKT. The chain crosses the membrane as a helical span at residues 347 to 367; it reads LVLILVVLIICWGPLLAIMVY. Topologically, residues 368-379 are extracellular; that stretch reads DVFGKMNNPIKT. The helical transmembrane segment at 380 to 401 threads the bilayer; that stretch reads VFAFCSMLCLMDSTVNPIIYAL. Topologically, residues 402–473 are cytoplasmic; it reads RSQDLRHAFL…VSTETSGEAV (72 aa). Cys417 carries S-palmitoyl cysteine lipidation.

This sequence belongs to the G-protein coupled receptor 1 family. Palmitoylation at Cys-417 is important for recruitment at both plasma membrane and lipid rafts and association with G protein alpha subunits.

It localises to the cell membrane. It is found in the mitochondrion outer membrane. The protein localises to the cell projection. Its subcellular location is the axon. The protein resides in the presynapse. Hemopressin, a peptide derived from hemoglobin subunit alpha (HBA1 and/or HBA2), acts as an antagonist peptide: hemopressin-binding efficiently blocks cannabinoid receptor CNR1 and subsequent signaling. Its function is as follows. G-protein coupled receptor for cannabinoids. Mediates many cannabinoid-induced effects in the central nervous system (CNS), as well as in peripheral tissues. Regulates cellular respiration and energy production in response to cannabinoids. Signaling typically involves reduction in cyclic AMP. This Taricha granulosa (Roughskin newt) protein is Cannabinoid receptor 1 (CNR1).